The sequence spans 319 residues: Beta-ketoacyl-[acyl-carrier-protein] synthase III (319 aa).

Residues Cys-113 and His-246 contribute to the active site. Positions 247 to 251 (QANIR) are ACP-binding. Asn-276 is a catalytic residue.

Belongs to the thiolase-like superfamily. FabH family. Homodimer.

Its subcellular location is the cytoplasm. It catalyses the reaction malonyl-[ACP] + acetyl-CoA + H(+) = 3-oxobutanoyl-[ACP] + CO2 + CoA. Its pathway is lipid metabolism; fatty acid biosynthesis. In terms of biological role, catalyzes the condensation reaction of fatty acid synthesis by the addition to an acyl acceptor of two carbons from malonyl-ACP. Catalyzes the first condensation reaction which initiates fatty acid synthesis and may therefore play a role in governing the total rate of fatty acid production. Possesses both acetoacetyl-ACP synthase and acetyl transacylase activities. Its substrate specificity determines the biosynthesis of branched-chain and/or straight-chain of fatty acids. This is Beta-ketoacyl-[acyl-carrier-protein] synthase III from Ehrlichia canis (strain Jake).